The sequence spans 358 residues: Arginine kinase (358 aa).

In terms of domain architecture, Phosphagen kinase N-terminal spans 6–88 (SVEELWAKLD…LDAVIKEYHK (83 aa)). 61 to 65 (GVGIY) provides a ligand contact to substrate. Residues 116-353 (YIVSTRVRVG…EACLAKEKEL (238 aa)) form the Phosphagen kinase C-terminal domain. Residues 119-123 (STRVR) and His182 each bind ATP. Position 222 (Glu222) interacts with substrate. Arg226 contributes to the ATP binding site. Residue Cys269 participates in substrate binding. ATP contacts are provided by residues 278 to 282 (RASVH) and 306 to 311 (RGIHGE). Glu311 provides a ligand contact to substrate.

This sequence belongs to the ATP:guanido phosphotransferase family. As to quaternary structure, monomer.

The catalysed reaction is L-arginine + ATP = N(omega)-phospho-L-arginine + ADP + H(+). This Haliotis madaka (Giant abalone) protein is Arginine kinase.